We begin with the raw amino-acid sequence, 434 residues long: Protein translocase subunit SecY (434 aa).

Transmembrane regions (helical) follow at residues 19–39 (LFTL…IPGI), 73–93 (IFML…LLVY), 117–137 (YLTI…AKGI), 148–168 (YIFV…WFGE), 179–199 (TSLI…FNLF), 209–229 (VNPV…ILII), 264–284 (VLPV…LSGF), 300–320 (PNGF…TYFY), 362–382 (FSGS…QNIF), and 391–411 (IMGG…LIHI).

This sequence belongs to the SecY/SEC61-alpha family. Component of the Sec protein translocase complex. Heterotrimer consisting of SecY, SecE and SecG subunits. The heterotrimers can form oligomers, although 1 heterotrimer is thought to be able to translocate proteins. Interacts with the ribosome. Interacts with SecDF, and other proteins may be involved. Interacts with SecA.

It localises to the cell inner membrane. Functionally, the central subunit of the protein translocation channel SecYEG. Consists of two halves formed by TMs 1-5 and 6-10. These two domains form a lateral gate at the front which open onto the bilayer between TMs 2 and 7, and are clamped together by SecE at the back. The channel is closed by both a pore ring composed of hydrophobic SecY resides and a short helix (helix 2A) on the extracellular side of the membrane which forms a plug. The plug probably moves laterally to allow the channel to open. The ring and the pore may move independently. The polypeptide is Protein translocase subunit SecY (Borreliella burgdorferi (strain ATCC 35210 / DSM 4680 / CIP 102532 / B31) (Borrelia burgdorferi)).